The chain runs to 347 residues: Aspartate carbamoyltransferase catalytic subunit (347 aa).

Carbamoyl phosphate-binding residues include Arg75 and Thr76. Residue Lys103 coordinates L-aspartate. Arg125, His153, and Gln156 together coordinate carbamoyl phosphate. L-aspartate is bound by residues Arg193 and Arg247. 2 residues coordinate carbamoyl phosphate: Gly288 and Pro289.

It belongs to the aspartate/ornithine carbamoyltransferase superfamily. ATCase family. Heterododecamer (2C3:3R2) of six catalytic PyrB chains organized as two trimers (C3), and six regulatory PyrI chains organized as three dimers (R2).

It carries out the reaction carbamoyl phosphate + L-aspartate = N-carbamoyl-L-aspartate + phosphate + H(+). It functions in the pathway pyrimidine metabolism; UMP biosynthesis via de novo pathway; (S)-dihydroorotate from bicarbonate: step 2/3. Its function is as follows. Catalyzes the condensation of carbamoyl phosphate and aspartate to form carbamoyl aspartate and inorganic phosphate, the committed step in the de novo pyrimidine nucleotide biosynthesis pathway. The sequence is that of Aspartate carbamoyltransferase catalytic subunit from Erythrobacter litoralis (strain HTCC2594).